The chain runs to 435 residues: Bystin (435 aa).

Positions 1-102 are disordered; it reads MPKFKAARGA…VPQDGSDDEE (102 aa). Omega-N-methylarginine is present on Arg-40. Residues 71–87 show a composition bias toward basic and acidic residues; the sequence is AEHGSGDRPAVPRERTT. Ser-98 carries the post-translational modification Phosphoserine. The residue at position 154 (Thr-154) is a Phosphothreonine. 2 positions are modified to phosphoserine: Ser-165 and Ser-412.

It belongs to the bystin family. As to quaternary structure, binds trophinin, tastin and cytokeratins.

The protein localises to the cytoplasm. It localises to the nucleus. Its subcellular location is the nucleolus. Required for processing of 20S pre-rRNA precursor and biogenesis of 40S ribosomal subunits. This Bos taurus (Bovine) protein is Bystin (BYSL).